We begin with the raw amino-acid sequence, 60 residues long: Large ribosomal subunit protein uL30 (60 aa).

It belongs to the universal ribosomal protein uL30 family. In terms of assembly, part of the 50S ribosomal subunit.

The chain is Large ribosomal subunit protein uL30 from Kineococcus radiotolerans (strain ATCC BAA-149 / DSM 14245 / SRS30216).